We begin with the raw amino-acid sequence, 510 residues long: Light-independent protochlorophyllide reductase subunit B (510 aa).

[4Fe-4S] cluster is bound at residue aspartate 36. Residue aspartate 296 is the Proton donor of the active site. A substrate-binding site is contributed by 431-432 (GM).

The protein belongs to the ChlB/BchB/BchZ family. Protochlorophyllide reductase is composed of three subunits; ChlL, ChlN and ChlB. Forms a heterotetramer of two ChlB and two ChlN subunits. It depends on [4Fe-4S] cluster as a cofactor.

It is found in the plastid. Its subcellular location is the chloroplast. The catalysed reaction is chlorophyllide a + oxidized 2[4Fe-4S]-[ferredoxin] + 2 ADP + 2 phosphate = protochlorophyllide a + reduced 2[4Fe-4S]-[ferredoxin] + 2 ATP + 2 H2O. It participates in porphyrin-containing compound metabolism; chlorophyll biosynthesis (light-independent). Functionally, component of the dark-operative protochlorophyllide reductase (DPOR) that uses Mg-ATP and reduced ferredoxin to reduce ring D of protochlorophyllide (Pchlide) to form chlorophyllide a (Chlide). This reaction is light-independent. The NB-protein (ChlN-ChlB) is the catalytic component of the complex. This chain is Light-independent protochlorophyllide reductase subunit B, found in Stigeoclonium helveticum (Green alga).